We begin with the raw amino-acid sequence, 81 residues long: Protein Vpu (81 aa).

The Extracellular portion of the chain corresponds to 1–7 (MQPLQIL). The chain crosses the membrane as a helical span at residues 8–28 (AIVALVVAAIIAIVVWTIVYI). The Cytoplasmic portion of the chain corresponds to 29 to 81 (EYRKILRQRKIDRLIDRITERAEDSGNESEGDQEELSALVERGHLAPWDVDDL). Positions 50–81 (AEDSGNESEGDQEELSALVERGHLAPWDVDDL) are disordered. A phosphoserine; by host CK2 mark is found at Ser-53 and Ser-57. Acidic residues predominate over residues 53 to 63 (SGNESEGDQEE).

The protein belongs to the HIV-1 VPU protein family. Homopentamer. Interacts with host CD4 and BRTC; these interactions induce proteasomal degradation of CD4. Interacts with host BST2; this interaction leads to the degradation of host BST2. Interacts with host FBXW11. Interacts with host AP1M1; this interaction plays a role in the mistrafficking and subsequent degradation of host BST2. Interacts with host RANBP2; this interaction allows Vpu to down-regulate host BLM sumoylation. Phosphorylated by host CK2. This phosphorylation is necessary for interaction with human BTRC and degradation of CD4.

It localises to the host membrane. With respect to regulation, ion channel activity is inhibited by hexamethylene amiloride in vitro. Functionally, enhances virion budding by targeting host CD4 and Tetherin/BST2 to proteasome degradation. Degradation of CD4 prevents any unwanted premature interactions between viral Env and its host receptor CD4 in the endoplasmic reticulum. Degradation of antiretroviral protein Tetherin/BST2 is important for virion budding, as BST2 tethers new viral particles to the host cell membrane. Mechanistically, Vpu bridges either CD4 or BST2 to BTRC, a substrate recognition subunit of the Skp1/Cullin/F-box protein E3 ubiquitin ligase, induces their ubiquitination and subsequent proteasomal degradation. The alteration of the E3 ligase specificity by Vpu seems to promote the degradation of host IKBKB, leading to NF-kappa-B down-regulation and subsequent apoptosis. Acts as a viroporin that forms an oligomeric ion channel in membranes. Modulates the host DNA repair mechanisms to promote degradation of nuclear viral cDNA in cells that are already productively infected in order to suppress immune sensing and proviral hyper-integration (superinfection). Manipulates PML-NBs and modulates SUMOylation of host BLM protein thereby enhancing its DNA-end processing activity toward viral unintegrated linear DNA. Also inhibits RAD52-mediated homologous repair of viral cDNA, preventing the generation of dead-end circular forms of single copies of the long terminal repeat and permitting sustained nucleolytic attack. The protein is Protein Vpu of Human immunodeficiency virus type 1 group M subtype B (isolate SF162) (HIV-1).